We begin with the raw amino-acid sequence, 316 residues long: MKRKLFTICLASLQFACAAENLNNKSYEWDIYPVPANAGDGMVWKLHPQSDDFNYIADEKDKGKEFYAKWTDFYHNHWTGPAPTIWQRDHVSVSDGFLKIRASRPEDVPLKKVVSGPNTKELPGTYTGCITSKTRVKYPVYVEAYAKLSNSTMASDVWMLSPDDTQEIDIIEAYGGDRDGGGYGADRLHLSHHIFIRQPFKDYQPKDSGSWYKDDKGTLWRDDFHRVGVFWKDPFTLEYYVDGELVRTISGKDIIDPNNYTGGTGLVKDMDIIINMEDQSWRAVKGLSPTDEELKNVEDHTFLVDWIRVYTLVPEE.

The first 18 residues, 1-18 (MKRKLFTICLASLQFACA), serve as a signal peptide directing secretion. Positions 27–315 (YEWDIYPVPA…WIRVYTLVPE (289 aa)) constitute a GH16 domain. Substrate-binding positions include Trp78, 87–97 (QRDHVSVSDGF), and 101–103 (RAS). Glu167 serves as the catalytic Nucleophile. Glu172 (proton donor) is an active-site residue. Residue Arg197 participates in substrate binding.

It belongs to the glycosyl hydrolase 16 family.

It carries out the reaction Hydrolysis of (1-&gt;4)-beta-D-galactosidic linkages in agarose, giving the tetramer as the predominant product.. Cleaves the beta-1,4-linkages between beta-D-galactose and alpha-L-3,6-anhydro-galactose residues in agarose. Cleaves agarose in a random manner with retention of the anomeric-bond configuration, producing beta-anomers that give rise progressively to alpha-anomers when mutarotation takes place. The chain is Beta-agarase from Phocaeicola plebeius (strain DSM 17135 / JCM 12973 / CCUG 54634 / M2) (Bacteroides plebeius).